Reading from the N-terminus, the 148-residue chain is Large ribosomal subunit protein bL9 (148 aa).

This sequence belongs to the bacterial ribosomal protein bL9 family.

Its function is as follows. Binds to the 23S rRNA. This Coprothermobacter proteolyticus (strain ATCC 35245 / DSM 5265 / OCM 4 / BT) protein is Large ribosomal subunit protein bL9.